The following is a 442-amino-acid chain: tRNA pseudouridine(38/39) synthase (442 aa).

The Nucleophile role is filled by aspartate 151. Tyrosine 222 provides a ligand contact to substrate.

This sequence belongs to the tRNA pseudouridine synthase TruA family.

It localises to the nucleus. The catalysed reaction is uridine(38/39) in tRNA = pseudouridine(38/39) in tRNA. In terms of biological role, formation of pseudouridines at positions 38 and 39 in the anticodon stem and loop of transfer RNAs. This chain is tRNA pseudouridine(38/39) synthase (DEG1), found in Saccharomyces cerevisiae (strain ATCC 204508 / S288c) (Baker's yeast).